The following is a 503-amino-acid chain: Methylthioalkylmalate synthase 3, chloroplastic (503 aa).

The transit peptide at 1–51 directs the protein to the chloroplast; sequence MASLLLTSSSMITTSCRSMVLRSGLPIGSSFPSLRLTRPYDKATLFVSCCS. In terms of domain architecture, Pyruvate carboxyltransferase spans 85–359; sequence VRVLDTTLRD…YTKIDSRQIM (275 aa).

The protein belongs to the alpha-IPM synthase/homocitrate synthase family. The cofactor is Mn(2+). As to expression, highly expressed in roots, leaves, and siliques. Lower amounts in stems and flowers.

The protein resides in the plastid. It localises to the chloroplast. The catalysed reaction is an omega-(methylsulfanyl)-2-oxoalkanoate + acetyl-CoA + H2O = a 2-(omega-methylsulfanyl)alkylmalate + CoA + H(+). With respect to regulation, not activated by ATP. Determines the side chain length of aliphatic glucosinolate structures. Accepts all the omega-methylthio-2-oxoalkanoic acids needed to form the known C3 to C8 glucosinolates. Also able to convert pyruvate to citramalate, 2-oxoisovalerate to isopropylmalate, 4-methyl-2-oxopentanoate and 5-methyl-2-oxohexanoate for Leu-derived glucosinolates, 3-methyl-2-oxopentanoate for Ile-derived glucosinolates and phenylpyruvate to phenylethylglucosinolate. The polypeptide is Methylthioalkylmalate synthase 3, chloroplastic (MAM3) (Arabidopsis thaliana (Mouse-ear cress)).